Here is a 1066-residue protein sequence, read N- to C-terminus: Vinculin (1066 aa).

The segment at 1 to 835 (MPVFHTRTIE…GAVAKVREAF (835 aa)) is N-terminal globular head. S97 carries the phosphoserine modification. Residues 168–208 (MTKMAKMIDERQQELTHQEHRVMLVNSMNTVKELLPVLISA) form a talin-interaction region. An N6-acetyllysine modification is found at K173. 3 repeat units span residues 259–369 (ASKD…KVEN), 370–479 (AARK…KTNR), and 480–589 (AVAN…QMQE). The tract at residues 259 to 589 (ASKDTEAMKR…LKDLKAQMQE (331 aa)) is 3 X 112 AA tandem repeats. Phosphoserine occurs at positions 260, 272, 275, 290, 346, and 434. The residue at position 496 (K496) is an N6-acetyllysine. At Y537 the chain carries Phosphotyrosine. S574, S579, and S600 each carry phosphoserine. T604 and T672 each carry phosphothreonine. Residue S721 is modified to Phosphoserine. An interaction with ACTN4 region spans residues 741 to 764 (MANIQPQMLVAGATSIARRANRIL). 2 positions are modified to phosphoserine: S795 and S809. The residue at position 822 (Y822) is a Phosphotyrosine. The segment at 836–878 (QPQEPDFPPPPPDLEQLRLTDELAPPKPPLPEGEVPPPRPPPP) is linker (Pro-rich). The interval 857-887 (ELAPPKPPLPEGEVPPPRPPPPEEKDEEFPE) is disordered. Pro residues predominate over residues 860–876 (PPKPPLPEGEVPPPRPP). The segment at 879 to 1066 (EEKDEEFPEQ…RWVRKTPWYQ (188 aa)) is C-terminal tail. 2 facilitates phospholipid membrane insertion regions span residues 935–978 (RLVR…KRIR) and 1052–1066 (AGFTLRWVRKTPWYQ). Position 1065 is a phosphotyrosine; by SRC-type Tyr-kinases (Y1065).

The protein belongs to the vinculin/alpha-catenin family. As to quaternary structure, exhibits self-association properties. Part of a complex composed of THSD1, PTK2/FAK1, TLN1 and VCL. Interacts with APBB1IP, NRAP and TLN1. Interacts with SYNM. Interacts with CTNNB1 and this interaction is necessary for its localization to the cell-cell junctions and for its function in regulating cell surface expression of E-cadherin. Interacts with SORBS1. Interacts with SYNM. Interacts with CTNNA1. Binds to ACTN4; this interaction triggers conformational changes. Interacts with FLII. Post-translationally, phosphorylated; on serines, threonines and tyrosines. Phosphorylation on Tyr-1065 in activated platelets affects head-tail interactions and cell spreading but has no effect on actin binding nor on localization to focal adhesion plaques. In terms of processing, acetylated; mainly by myristic acid but also by a small amount of palmitic acid.

The protein localises to the cell membrane. The protein resides in the cell junction. It is found in the adherens junction. Its subcellular location is the focal adhesion. It localises to the cytoplasm. The protein localises to the cytoskeleton. The protein resides in the sarcolemma. It is found in the cell projection. Its subcellular location is the podosome. Its function is as follows. Actin filament (F-actin)-binding protein involved in cell-matrix adhesion and cell-cell adhesion. Regulates cell-surface E-cadherin expression and potentiates mechanosensing by the E-cadherin complex. May also play important roles in cell morphology and locomotion. The sequence is that of Vinculin (Vcl) from Mus musculus (Mouse).